The chain runs to 283 residues: Pyridoxine/pyridoxal/pyridoxamine kinase (283 aa).

The substrate site is built by serine 23 and histidine 59. An ATP-binding site is contributed by aspartate 125. Tyrosine 136 contributes to the Mg(2+) binding site. ATP-binding positions include threonine 157, glutamate 162, threonine 195, 222–225, and threonine 232; that span reads HAHV. Glutamate 162 is a Mg(2+) binding site. Substrate is bound at residue aspartate 234.

Belongs to the pyridoxine kinase family. PdxK subfamily. In terms of assembly, homodimer. It depends on Mg(2+) as a cofactor.

It catalyses the reaction pyridoxal + ATP = pyridoxal 5'-phosphate + ADP + H(+). The catalysed reaction is pyridoxine + ATP = pyridoxine 5'-phosphate + ADP + H(+). The enzyme catalyses pyridoxamine + ATP = pyridoxamine 5'-phosphate + ADP + H(+). It participates in cofactor metabolism; pyridoxal 5'-phosphate salvage; pyridoxal 5'-phosphate from pyridoxal: step 1/1. Its pathway is cofactor metabolism; pyridoxal 5'-phosphate salvage; pyridoxine 5'-phosphate from pyridoxine: step 1/1. The protein operates within cofactor metabolism; pyridoxal 5'-phosphate salvage; pyridoxamine 5'-phosphate from pyridoxamine: step 1/1. In terms of biological role, B6-vitamer kinase involved in the salvage pathway of pyridoxal 5'-phosphate (PLP). Catalyzes the phosphorylation of pyridoxine (PN), pyridoxal (PL), and pyridoxamine (PM), forming their respective 5'-phosphorylated esters, i.e. PNP, PLP and PMP. The chain is Pyridoxine/pyridoxal/pyridoxamine kinase from Bordetella bronchiseptica (strain ATCC BAA-588 / NCTC 13252 / RB50) (Alcaligenes bronchisepticus).